The sequence spans 1165 residues: DNA-directed RNA polymerase subunit beta' (1165 aa).

Zn(2+) contacts are provided by Cys-60, Cys-62, Cys-75, and Cys-78. Mg(2+) is bound by residues Asp-449, Asp-451, and Asp-453. Residues Cys-794, Cys-868, Cys-875, and Cys-878 each contribute to the Zn(2+) site.

Belongs to the RNA polymerase beta' chain family. As to quaternary structure, the RNAP catalytic core consists of 2 alpha, 1 beta, 1 beta' and 1 omega subunit. When a sigma factor is associated with the core the holoenzyme is formed, which can initiate transcription. The cofactor is Mg(2+). Zn(2+) is required as a cofactor.

The catalysed reaction is RNA(n) + a ribonucleoside 5'-triphosphate = RNA(n+1) + diphosphate. Functionally, DNA-dependent RNA polymerase catalyzes the transcription of DNA into RNA using the four ribonucleoside triphosphates as substrates. The sequence is that of DNA-directed RNA polymerase subunit beta' from Acetivibrio thermocellus (strain ATCC 27405 / DSM 1237 / JCM 9322 / NBRC 103400 / NCIMB 10682 / NRRL B-4536 / VPI 7372) (Clostridium thermocellum).